The chain runs to 37 residues: Palicourein (37 aa).

Residues 1–37 constitute a cross-link (cyclopeptide (Gly-Asn)); that stretch reads GDPTFCGETCRVIPVCTYSAALGCTCDDRSDGLCKRN. 3 disulfide bridges follow: Cys-6–Cys-24, Cys-10–Cys-26, and Cys-16–Cys-34.

This sequence belongs to the cyclotide family. This is a cyclic peptide.

Probably participates in a plant defense mechanism. Inhibits the cytopathic effects of the human immunodeficiency virus. This is Palicourein from Palicourea condensata (Cappel).